The sequence spans 363 residues: D-alanine--D-alanine ligase (363 aa).

An ATP-grasp domain is found at 146–352; it reads KLCAADAGVA…FTALIDKLLH (207 aa). 179 to 234 is an ATP binding site; that stretch reads DSTFGYPLFVKPASLGSSVGISKVHLPAALPEALKVACSYDRKILVEAAVSGKEIE. Mg(2+) is bound by residues aspartate 305, glutamate 319, and asparagine 321.

The protein belongs to the D-alanine--D-alanine ligase family. Mg(2+) is required as a cofactor. The cofactor is Mn(2+).

The protein resides in the cytoplasm. It carries out the reaction 2 D-alanine + ATP = D-alanyl-D-alanine + ADP + phosphate + H(+). It functions in the pathway cell wall biogenesis; peptidoglycan biosynthesis. Cell wall formation. The protein is D-alanine--D-alanine ligase of Chlorobium limicola (strain DSM 245 / NBRC 103803 / 6330).